The chain runs to 412 residues: uncharacterized protein (412 aa).

H49 provides a ligand contact to Zn(2+). Residue E52 is the Proton acceptor of the active site. Residues H53 and E129 each coordinate Zn(2+).

The protein belongs to the peptidase M16 family. Zn(2+) is required as a cofactor.

This is an uncharacterized protein from Rickettsia felis (strain ATCC VR-1525 / URRWXCal2) (Rickettsia azadi).